The sequence spans 265 residues: Apolipoprotein A-I (265 aa).

The first 18 residues, 1 to 18 (MKALVLTLAVLFFTGSQA), serve as a signal peptide directing secretion. 2 repeat units span residues 67–88 (LKLLDNWDSLTSTFAKVREQLG) and 89–110 (PVTQEFWDNLEKETESLRQEMN). The interval 67–265 (LKLLDNWDSL…DEASKKLNAQ (199 aa)) is 10 X approximate tandem repeats. Methionine sulfoxide is present on methionine 109. One copy of the 3; half-length repeat lies at 111-121 (KDLEEVKQKVQ). Repeat copies occupy residues 122 to 142 (PYLDEFKRKWQEELQIYRQKV), 144 to 165 (PLGEELREGARQKVQELQDKLT), 166 to 187 (PLAEEMRDRARAHVETLRQQLA), 188 to 209 (PYSDDLRQRMATRFEVLKEGGG), and 210 to 230 (SLAEYHAKASEQLKALGEKAK). A 9; half-length repeat occupies 231–241 (PALEDLRQGLL). Repeat 10 spans residues 242 to 265 (PVLESLKVSILAAIDEASKKLNAQ).

Belongs to the apolipoprotein A1/A4/E family. In terms of assembly, homodimer. Interacts with APOA1BP and CLU. Component of a sperm activating protein complex (SPAP), consisting of APOA1, an immunoglobulin heavy chain, an immunoglobulin light chain and albumin. Interacts with NDRG1. Interacts with SCGB3A2. Interacts with NAXE and YJEFN3. In terms of processing, glycosylated. Post-translationally, palmitoylated. Phosphorylation sites are present in the extracellular medium. In terms of tissue distribution, major protein of plasma HDL, also found in chylomicrons.

The protein resides in the secreted. Participates in the reverse transport of cholesterol from tissues to the liver for excretion by promoting cholesterol efflux from tissues and by acting as a cofactor for the lecithin cholesterol acyltransferase (LCAT). As part of the SPAP complex, activates spermatozoa motility. This is Apolipoprotein A-I (APOA1) from Physeter macrocephalus (Sperm whale).